The primary structure comprises 130 residues: Protein ApaG (130 aa).

The 125-residue stretch at 3 to 127 (SAVTRGIEVT…FSLDVPEQRR (125 aa)) folds into the ApaG domain.

The protein is Protein ApaG of Brucella suis biovar 1 (strain 1330).